A 460-amino-acid polypeptide reads, in one-letter code: ERAD-associated E3 ubiquitin-protein ligase HRD1B (460 aa).

Topologically, residues 1 to 3 (MIQ) are cytoplasmic. Residues 4-24 (LKVYAGLSTLATLVVIYHAFS) traverse the membrane as a helical segment. The Lumenal portion of the chain corresponds to 25–40 (SRGQFYPATVYLSTSK). A helical membrane pass occupies residues 41 to 61 (INLVVLLNMGLVLMLSLWNLV). Over 62–98 (KIVFLGSLREAEVERLNEQAWRELMEILFAITIFRQD) the chain is Cytoplasmic. Residues 99–119 (FSVGFISLVVTLLLIKGLHWM) form a helical membrane-spanning segment. The Lumenal segment spans residues 120–140 (AQKRVEYIETTPSVTLLSHVR). The helical transmembrane segment at 141 to 161 (IVSFMVFLLILDCLLTYSSIQ) threads the bilayer. Residues 162–170 (QLIQSRKAS) are Cytoplasmic-facing. The chain crosses the membrane as a helical span at residues 171–191 (MSVFFTFEYMILATTTVSIIV). Residues 192–225 (KYAFYVTDMLKEGQWEGKPVYTFYLELVRDLLHL) lie on the Lumenal side of the membrane. The helical transmembrane segment at 226-246 (SMYLCFFLMIFMNYGLPLHLI) threads the bilayer. Residues 247–460 (RELYETFRNF…TKGKSVADTA (214 aa)) are Cytoplasmic-facing. Residues 292-330 (CIICREEMTSAKKLVCGHLFHVHCLRSWLERQNTCPTCR) form an RING-type; atypical zinc finger. The interval 339–378 (ATSTASGNRGPHQESLQQGTGTSSSDGQGSSVSAAASENM) is disordered. Residues 353 to 375 (SLQQGTGTSSSDGQGSSVSAAAS) show a composition bias toward low complexity.

It belongs to the HRD1 family.

The protein localises to the endoplasmic reticulum membrane. The catalysed reaction is S-ubiquitinyl-[E2 ubiquitin-conjugating enzyme]-L-cysteine + [acceptor protein]-L-lysine = [E2 ubiquitin-conjugating enzyme]-L-cysteine + N(6)-ubiquitinyl-[acceptor protein]-L-lysine.. Its pathway is protein modification; protein ubiquitination. In terms of biological role, probable component of the HRD1 ubiquitin ligase complex that mediates the rapid degradation of misfolded endoplasmic reticulum (ER) proteins, a process called ER-associated degradation (ERAD). Targets the misfolded LRR receptor kinase BRI1. Functions redundantly with HRD3A. This Arabidopsis thaliana (Mouse-ear cress) protein is ERAD-associated E3 ubiquitin-protein ligase HRD1B.